The primary structure comprises 156 residues: Endoribonuclease YbeY (156 aa).

The Zn(2+) site is built by H122, H126, and H132.

It belongs to the endoribonuclease YbeY family. The cofactor is Zn(2+).

Its subcellular location is the cytoplasm. Its function is as follows. Single strand-specific metallo-endoribonuclease involved in late-stage 70S ribosome quality control and in maturation of the 3' terminus of the 16S rRNA. The polypeptide is Endoribonuclease YbeY (Bacillus cytotoxicus (strain DSM 22905 / CIP 110041 / 391-98 / NVH 391-98)).